The primary structure comprises 340 residues: Probable complex I intermediate-associated protein 30, mitochondrial (340 aa).

The protein belongs to the CIA30 family.

It is found in the mitochondrion. Its function is as follows. Chaperone protein involved in the assembly of the mitochondrial NADH:ubiquinone oxidoreductase complex (complex I). Required for normal growth and reproduction. The polypeptide is Probable complex I intermediate-associated protein 30, mitochondrial (nuaf-1) (Caenorhabditis elegans).